The chain runs to 232 residues: Heptaprenylglyceryl phosphate synthase (232 aa).

Lysine 12 provides a ligand contact to sn-glycerol 1-phosphate. Mg(2+) contacts are provided by aspartate 14 and threonine 40. Sn-glycerol 1-phosphate contacts are provided by residues 159–164, glycine 189, and 209–210; these read YLEYSG and GN.

The protein belongs to the GGGP/HepGP synthase family. Group I subfamily. Homodimer. The cofactor is Mg(2+).

It catalyses the reaction sn-glycerol 1-phosphate + all-trans-heptaprenyl diphosphate = 3-heptaprenyl-sn-glycero-1-phosphate + diphosphate. Its pathway is membrane lipid metabolism; glycerophospholipid metabolism. Prenyltransferase that catalyzes in vivo the transfer of the heptaprenyl moiety of heptaprenyl pyrophosphate (HepPP; 35 carbon atoms) to the C3 hydroxyl of sn-glycerol-1-phosphate (G1P), producing heptaprenylglyceryl phosphate (HepGP). This reaction is an ether-bond-formation step in the biosynthesis of archaea-type G1P-based membrane lipids found in Bacillales. This chain is Heptaprenylglyceryl phosphate synthase, found in Shouchella clausii (strain KSM-K16) (Alkalihalobacillus clausii).